Consider the following 321-residue polypeptide: Tetraacyldisaccharide 4'-kinase (321 aa).

54–61 (SVGGTGKT) contributes to the ATP binding site.

It belongs to the LpxK family.

It catalyses the reaction a lipid A disaccharide + ATP = a lipid IVA + ADP + H(+). The protein operates within glycolipid biosynthesis; lipid IV(A) biosynthesis; lipid IV(A) from (3R)-3-hydroxytetradecanoyl-[acyl-carrier-protein] and UDP-N-acetyl-alpha-D-glucosamine: step 6/6. Its function is as follows. Transfers the gamma-phosphate of ATP to the 4'-position of a tetraacyldisaccharide 1-phosphate intermediate (termed DS-1-P) to form tetraacyldisaccharide 1,4'-bis-phosphate (lipid IVA). This is Tetraacyldisaccharide 4'-kinase from Rickettsia conorii (strain ATCC VR-613 / Malish 7).